The primary structure comprises 485 residues: E3 ubiquitin-protein ligase TRIM34A (485 aa).

The RING-type zinc-finger motif lies at 15–59; it reads CPVCQELLTKALSLGCGHRVCQACLITKKNAVINPREKSSCPVCG. Residues 91-132 form a B box-type zinc finger; that stretch reads TKRDLCVHHGEKLLLFCKEDKKAICWVCERSQEHRGHHTFLW. Residues Cys96, His99, Cys118, and His124 each contribute to the Zn(2+) site. The stretch at 136–170 forms a coiled coil; it reads VRECQENLQKALTRLRKEQEKVETLEADIKEDRLS. Residues 282–485 form the B30.2/SPRY domain; sequence LSGMLQKFRE…APMTLCPLNS (204 aa).

Belongs to the TRIM/RBCC family. Homotrimer. Interacts (via B-box and SPRY domain) with TRIM5.

The protein localises to the cytoplasm. It is found in the mitochondrion. It carries out the reaction S-ubiquitinyl-[E2 ubiquitin-conjugating enzyme]-L-cysteine + [acceptor protein]-L-lysine = [E2 ubiquitin-conjugating enzyme]-L-cysteine + N(6)-ubiquitinyl-[acceptor protein]-L-lysine.. It participates in protein modification; protein ubiquitination. Functions as antiviral protein and contributes to the defense against retroviral infections. Acts as a capsid-specific restriction factor with the help of TRIM5 and prevents infection from non-host-adapted retroviruses. During influenza A virus infection, promotes programmed cell death by targeting ZBP1 for 'Lys-63'-linked polyubiquitination. In turn, promotes ZBP1 recruitment of RIPK3 to mediate virus-induced programmed necrosis. Negatively regulates the function of mitochondria by enhancing mitochondrial depolarization leading to cytochrome c release and mitochondria-dependent apoptosis. Also promotes the formation of multinucleated giant cells by means of cell fusion and phagocytosis in epithelial cells. Plays an essential role in sustaining the integrity of the inner mucus layer in the colon by controlling the exocytosis of the major component of colonic mucus MUC2 from colonic goblet cells. In Mus musculus (Mouse), this protein is E3 ubiquitin-protein ligase TRIM34A.